The chain runs to 436 residues: ATP-dependent protease ATPase subunit HslU (436 aa).

ATP-binding positions include isoleucine 19, 61 to 65 (GVGKT), aspartate 249, glutamate 314, and arginine 386.

The protein belongs to the ClpX chaperone family. HslU subfamily. A double ring-shaped homohexamer of HslV is capped on each side by a ring-shaped HslU homohexamer. The assembly of the HslU/HslV complex is dependent on binding of ATP.

The protein resides in the cytoplasm. Its function is as follows. ATPase subunit of a proteasome-like degradation complex; this subunit has chaperone activity. The binding of ATP and its subsequent hydrolysis by HslU are essential for unfolding of protein substrates subsequently hydrolyzed by HslV. HslU recognizes the N-terminal part of its protein substrates and unfolds these before they are guided to HslV for hydrolysis. The polypeptide is ATP-dependent protease ATPase subunit HslU (Bartonella tribocorum (strain CIP 105476 / IBS 506)).